The chain runs to 1042 residues: Ubiquitin carboxyl-terminal hydrolase 38 (1042 aa).

Residues 445-949 enclose the USP domain; the sequence is TGLINLGNTC…TAYVLLYKKQ (505 aa). C454 serves as the catalytic Nucleophile. The Proton acceptor role is filled by H857.

The protein belongs to the peptidase C19 family. In terms of assembly, interacts with isoform 1 of FBXW7; this interaction prevents FBXW7-mediated degradation of MYC.

Its subcellular location is the cytoplasm. It localises to the nucleus. It carries out the reaction Thiol-dependent hydrolysis of ester, thioester, amide, peptide and isopeptide bonds formed by the C-terminal Gly of ubiquitin (a 76-residue protein attached to proteins as an intracellular targeting signal).. In terms of biological role, deubiquitinating enzyme that plays a role in various cellular processes, including DNA repair, cell cycle regulation, and immune response. Plays a role in the inhibition of type I interferon signaling by mediating the 'Lys-33' to 'Lys-48' ubiquitination transition of TBK1 leading to its degradation. Cleaves the ubiquitin chain from the histone demethylase LSD1/KDM1A and prevents it from degradation by the 26S proteasome, thus maintaining LSD1 protein level in cells. Plays a role in the DNA damage response by regulating the deacetylase activity of HDAC1. Mechanistically, removes the 'Lys-63'-linked ubiquitin chain promoting the deacetylase activity of HDAC1 in response to DNA damage. Also acts as a specific deubiquitinase of histone deacetylase 3/HDAC3 and cleaves its 'Lys-63'-linked ubiquitin chains to lower its histone deacetylase activity. Regulates MYC levels and cell proliferation via antagonizing ubiquitin E3 ligase FBXW7 thereby preventing MYC 'Lys-48'-linked ubiquitination and degradation. Participates in antiviral response by removing both 'Lys-48'-linked and 'Lys-63'-linked polyubiquitination of Zika virus envelope protein E. Constitutively associated with IL-33R/IL1RL1, deconjugates its 'Lys-27'-linked polyubiquitination resulting in its autophagic degradation. This is Ubiquitin carboxyl-terminal hydrolase 38 (Usp38) from Mus musculus (Mouse).